A 159-amino-acid chain; its full sequence is Ribosome maturation factor RimP (159 aa).

It belongs to the RimP family.

It localises to the cytoplasm. Functionally, required for maturation of 30S ribosomal subunits. This Geobacter sulfurreducens (strain ATCC 51573 / DSM 12127 / PCA) protein is Ribosome maturation factor RimP.